Here is a 470-residue protein sequence, read N- to C-terminus: Retinoic acid receptor RXR-gamma (470 aa).

The modulating stretch occupies residues 1–145 (MHLATETAPS…NSPGALTKHI (145 aa)). 2 consecutive NR C4-type zinc fingers follow at residues 146 to 166 (CAIC…CEGC) and 182 to 206 (CRDS…YQKC). The nuclear receptor DNA-binding region spans 146–211 (CAICGDRSSG…RYQKCLAMGM (66 aa)). The tract at residues 212 to 235 (KREAVQEERQRSREKSDTEAESTS) is hinge. Residues 217–229 (QEERQRSREKSDT) show a composition bias toward basic and acidic residues. The tract at residues 217-242 (QEERQRSREKSDTEAESTSSTSEEMP) is disordered. Positions 238-466 (SEEMPVERIL…TFLMEMLETP (229 aa)) constitute an NR LBD domain.

This sequence belongs to the nuclear hormone receptor family. NR2 subfamily. Homodimer. Heterodimer; with a rar molecule. Binds DNA preferentially as a rar/rxr heterodimer.

It localises to the nucleus. Its function is as follows. Receptor for retinoic acid. Retinoic acid receptors bind as heterodimers to their target response elements in response to their ligands, all-trans or 9-cis retinoic acid, and regulate gene expression in various biological processes. The rar/rxr heterodimers bind to the retinoic acid response elements (RARE) composed of tandem 5'-AGGTCA-3' sites known as DR1-DR5. The high affinity ligand for rxrs is 9-cis retinoic acid. This chain is Retinoic acid receptor RXR-gamma (rxrg), found in Xenopus laevis (African clawed frog).